The chain runs to 390 residues: Probable L-tyrosine/L-aspartate decarboxylase (390 aa).

Position 239 is an N6-(pyridoxal phosphate)lysine (lysine 239).

Belongs to the group II decarboxylase family. MfnA subfamily. It depends on pyridoxal 5'-phosphate as a cofactor.

It carries out the reaction L-tyrosine + H(+) = tyramine + CO2. It catalyses the reaction L-aspartate + H(+) = beta-alanine + CO2. Its pathway is cofactor biosynthesis; methanofuran biosynthesis. It functions in the pathway cofactor biosynthesis; coenzyme A biosynthesis. Functionally, catalyzes the decarboxylation of L-tyrosine to produce tyramine for methanofuran biosynthesis. Can also catalyze the decarboxylation of L-aspartate to produce beta-alanine for coenzyme A (CoA) biosynthesis. This Methanococcus aeolicus (strain ATCC BAA-1280 / DSM 17508 / OCM 812 / Nankai-3) protein is Probable L-tyrosine/L-aspartate decarboxylase.